A 703-amino-acid chain; its full sequence is DnaJ homolog subfamily C member 14 (703 aa).

Positions 1–11 (MAQKHPGERRL) are enriched in basic and acidic residues. Positions 1-229 (MAQKHPGERR…GRHRLARKRS (229 aa)) are disordered. Low complexity predominate over residues 17–28 (SGGTSLSTSGSS). Residues 75-84 (HGPPRGPGPP) show a composition bias toward pro residues. Over residues 91–102 (DESETGSEESGV) the composition is skewed to acidic residues. Residues 121–133 (SFLSIPSACNCQG) are compositionally biased toward polar residues. The span at 163-176 (GEDEELEEEYDDEE) shows a compositional bias: acidic residues. A compositionally biased stretch (basic residues) spans 193 to 202 (PLSRRQKHRF). Basic and acidic residues predominate over residues 203-218 (LIKEDVRDSGRREPKA). Over residues 219-228 (PGRHRLARKR) the composition is skewed to basic residues. 2 consecutive transmembrane segments (helical) span residues 305–325 (MMFQFLSQSFFCVVGLLIRIL) and 327–347 (VVGAFLLLALALFLGCLQLGW). The 65-residue stretch at 444-508 (NPFHVLGVEA…ERRKEYEMKR (65 aa)) folds into the J domain. 2 disordered regions span residues 622-643 (FGSRVPGTSGRQRATPESPPAD) and 659-703 (MSNG…PFQR). The segment covering 673–684 (GTTSTSRPNSSV) has biased composition (polar residues). Positions 691–703 (PKRRKKVRRPFQR) are enriched in basic residues.

As to quaternary structure, interacts with the FxxxFxxxF motif of DRD1 via its C-terminal domain.

Its subcellular location is the endoplasmic reticulum membrane. In terms of biological role, regulates the export of target proteins, such as DRD1, from the endoplasmic reticulum to the cell surface. The protein is DnaJ homolog subfamily C member 14 (Dnajc14) of Mus musculus (Mouse).